A 179-amino-acid chain; its full sequence is Putative invertase inhibitor (179 aa).

The N-terminal stretch at 1 to 23 is a signal peptide; it reads MKLSFSLCIFFFNLLLLLQAVIS. Disulfide bonds link cysteine 31–cysteine 46 and cysteine 102–cysteine 142.

This sequence belongs to the PMEI family. As to quaternary structure, monomer. Post-translationally, not glycosylated. As to expression, expressed in pollen (at protein level). Expressed in stem, but not leaves (at protein level). Expressed in pollen.

It localises to the secreted. The protein resides in the cell wall. It is found in the endoplasmic reticulum. In terms of biological role, invertase inhibitor. The polypeptide is Putative invertase inhibitor (Platanus acerifolia (London plane tree)).